The primary structure comprises 623 residues: MDLISVLPSASKSCVCLHKPLSSSTHKLKPFCKTIRILGMPRRWKFAGPSMSLSTVASDDDIQRRTGGYHSNLWNDDVIQFLSTPYGELAYRERAERLIDEVRDIFSSMSLEDGEFSDLIQRLWMVDNVERLGIDRHFKNEIKSALDYVYSYWSEKGIGCGTKSIITNLNSTALGFRTLRLHGYPVSADVLKHFRNQIGQFVSCPSETEEDIRSMVNLYRASLIAFPGEEVMEEAERFSEKYLKETLQKIPDCSLSREIGDVLEHGWHTNLPRLEARNYIDVFGQDTKNMESNRKTEKLLELAKLEFNIFQSIQETELESLLRWWNDSGSPQITFTRHRHVEYYTLASCIAFEPQHSGFRLGFAKACHIITVLDDMYDLFGTVDELKLFTAAIKRWDPSATDCLPQYMKGIYMMVYNTVNEMSAEAQKAQGRDTLNYARQAWEDCLDSYMQEAKWIATGFLPTFEEYLENGKVSSAHRVSALQPMLTMDIPFPPHILKEVDFPSNLNDLACAMLRLRGDTRCYQADRARGEETSCISCYMKDNPGATEEDALNRLNVMISGVIKELNWELLKPDSGVPISSKKINFDITRAFHYGYKYRDGYSVSSVETKSFVMRTLLEPVPL.

The transit peptide at M1–S52 directs the protein to the chloroplast. Mg(2+) is bound by residues D374, D378, and D526. The DDXXD motif signature appears at D374–D378.

It belongs to the terpene synthase family. Tpsd subfamily. It depends on Mg(2+) as a cofactor. Mn(2+) serves as cofactor.

The protein localises to the plastid. The protein resides in the chloroplast. It carries out the reaction (2E)-geranyl diphosphate = (1S,5S)-alpha-pinene + diphosphate. The enzyme catalyses (2E)-geranyl diphosphate = (1S,5S)-beta-pinene + diphosphate. It catalyses the reaction (2E)-geranyl diphosphate = (-)-beta-phellandrene + diphosphate. It functions in the pathway terpene metabolism; oleoresin biosynthesis. It participates in secondary metabolite biosynthesis; terpenoid biosynthesis. Monoterpene synthase (TPS) involved in the biosynthesis of monoterpene natural products included in conifer oleoresin secretions and volatile emissions; these compounds contribute to biotic and abiotic stress defense against herbivores and pathogens. Catalyzes the conversion of (2E)-geranyl diphosphate (GPP) to (-)-alpha-pinene and (-)-beta-pinene, and, to a lower extent, to (-)-beta-phellandrene. This is (-)-alpha-pinene synthase 1, chloroplastic from Pinus banksiana (Jack pine).